Here is a 256-residue protein sequence, read N- to C-terminus: 5-oxoprolinase subunit A 1 (256 aa).

The protein belongs to the LamB/PxpA family. Forms a complex composed of PxpA, PxpB and PxpC.

It catalyses the reaction 5-oxo-L-proline + ATP + 2 H2O = L-glutamate + ADP + phosphate + H(+). In terms of biological role, catalyzes the cleavage of 5-oxoproline to form L-glutamate coupled to the hydrolysis of ATP to ADP and inorganic phosphate. The chain is 5-oxoprolinase subunit A 1 from Pseudomonas syringae pv. tomato (strain ATCC BAA-871 / DC3000).